Reading from the N-terminus, the 158-residue chain is SsrA-binding protein (158 aa).

Positions 131 to 158 are disordered; the sequence is GKKTHDKRETEKKRDWNREKARLLRDRG. The span at 136 to 158 shows a compositional bias: basic and acidic residues; the sequence is DKRETEKKRDWNREKARLLRDRG.

This sequence belongs to the SmpB family.

The protein localises to the cytoplasm. Its function is as follows. Required for rescue of stalled ribosomes mediated by trans-translation. Binds to transfer-messenger RNA (tmRNA), required for stable association of tmRNA with ribosomes. tmRNA and SmpB together mimic tRNA shape, replacing the anticodon stem-loop with SmpB. tmRNA is encoded by the ssrA gene; the 2 termini fold to resemble tRNA(Ala) and it encodes a 'tag peptide', a short internal open reading frame. During trans-translation Ala-aminoacylated tmRNA acts like a tRNA, entering the A-site of stalled ribosomes, displacing the stalled mRNA. The ribosome then switches to translate the ORF on the tmRNA; the nascent peptide is terminated with the 'tag peptide' encoded by the tmRNA and targeted for degradation. The ribosome is freed to recommence translation, which seems to be the essential function of trans-translation. The sequence is that of SsrA-binding protein from Brucella abortus biovar 1 (strain 9-941).